The chain runs to 369 residues: Anhydro-N-acetylmuramic acid kinase (369 aa).

12–19 (GTSMDGVD) serves as a coordination point for ATP.

Belongs to the anhydro-N-acetylmuramic acid kinase family.

The enzyme catalyses 1,6-anhydro-N-acetyl-beta-muramate + ATP + H2O = N-acetyl-D-muramate 6-phosphate + ADP + H(+). Its pathway is amino-sugar metabolism; 1,6-anhydro-N-acetylmuramate degradation. The protein operates within cell wall biogenesis; peptidoglycan recycling. Catalyzes the specific phosphorylation of 1,6-anhydro-N-acetylmuramic acid (anhMurNAc) with the simultaneous cleavage of the 1,6-anhydro ring, generating MurNAc-6-P. Is required for the utilization of anhMurNAc either imported from the medium or derived from its own cell wall murein, and thus plays a role in cell wall recycling. The chain is Anhydro-N-acetylmuramic acid kinase from Shewanella baltica (strain OS155 / ATCC BAA-1091).